A 109-amino-acid polypeptide reads, in one-letter code: Cell division protein ZapA (109 aa).

The stretch at 21–97 (PEQRDALSQA…QTIEQALLDQ (77 aa)) forms a coiled coil.

Belongs to the ZapA family. Type 1 subfamily. Homodimer. Interacts with FtsZ.

It localises to the cytoplasm. Its function is as follows. Activator of cell division through the inhibition of FtsZ GTPase activity, therefore promoting FtsZ assembly into bundles of protofilaments necessary for the formation of the division Z ring. It is recruited early at mid-cell but it is not essential for cell division. In Enterobacter sp. (strain 638), this protein is Cell division protein ZapA.